Consider the following 786-residue polypeptide: DNA repair and recombination protein RAD54-like (786 aa).

The interval arginine 2–glutamine 9 is required for chromatin remodeling, strand pairing activities and coupling of ATPase activity. Residue threonine 22 is modified to Phosphothreonine. Residues glutamate 165–glutamate 340 enclose the Helicase ATP-binding domain. Aspartate 178 to threonine 185 lines the ATP pocket. A DEGH box motif is present at residues aspartate 291 to histidine 294. In terms of domain architecture, Helicase C-terminal spans leucine 497–threonine 654. Residues glutamate 738–phenylalanine 786 form a disordered region. The span at asparagine 776–phenylalanine 786 shows a compositional bias: polar residues.

Belongs to the SNF2/RAD54 helicase family. Interacts (via N-terminus) with spn-A/Rad51.

It localises to the nucleus. Involved in mitotic DNA repair and meiotic recombination. Functions in the recombinational DNA repair pathway. Essential for interhomolog gene conversion (GC), but may have a less important role in intersister GC than spn-A/Rad51. In the presence of DNA, spn-A/Rad51 enhances the ATPase activity of okr/Rad54. This is DNA repair and recombination protein RAD54-like from Drosophila grimshawi (Hawaiian fruit fly).